Reading from the N-terminus, the 135-residue chain is NADPH-dependent 7-cyano-7-deazaguanine reductase (135 aa).

Cys-48 (thioimide intermediate) is an active-site residue. Catalysis depends on Asp-55, which acts as the Proton donor. Substrate-binding positions include 70 to 72 (IEL) and 89 to 90 (HE).

This sequence belongs to the GTP cyclohydrolase I family. QueF type 1 subfamily.

The protein localises to the cytoplasm. The catalysed reaction is 7-aminomethyl-7-carbaguanine + 2 NADP(+) = 7-cyano-7-deazaguanine + 2 NADPH + 3 H(+). It participates in tRNA modification; tRNA-queuosine biosynthesis. Functionally, catalyzes the NADPH-dependent reduction of 7-cyano-7-deazaguanine (preQ0) to 7-aminomethyl-7-deazaguanine (preQ1). The polypeptide is NADPH-dependent 7-cyano-7-deazaguanine reductase (Prochlorococcus marinus (strain MIT 9313)).